A 312-amino-acid chain; its full sequence is Pre-mRNA-splicing factor 38A (312 aa).

Residues 1–179 form an N-terminal protein interaction domain region; it reads MANRTVKDAH…VLEETEQLDP (179 aa). Positions 180 to 312 are disordered; it reads RVSALEEDMD…SHKKSRRGNE (133 aa). A compositionally biased stretch (acidic residues) spans 184-201; sequence LEEDMDDVESSEEEEDED. Over residues 202-223 the composition is skewed to basic and acidic residues; it reads EKGRDPSPEHHRRNYRDLDRPR. Basic residues-rich tracts occupy residues 224–294 and 301–312; these read RSPS…RSHS and KKSHKKSRRGNE.

It belongs to the PRP38 family. In terms of assembly, component of the spliceosome B complex.

The protein resides in the nucleus. Functionally, involved in pre-mRNA splicing as a component of the spliceosome. The sequence is that of Pre-mRNA-splicing factor 38A (prpf38a) from Xenopus tropicalis (Western clawed frog).